The sequence spans 431 residues: Glutamate-1-semialdehyde 2,1-aminomutase (431 aa).

Lysine 269 carries the N6-(pyridoxal phosphate)lysine modification.

The protein belongs to the class-III pyridoxal-phosphate-dependent aminotransferase family. HemL subfamily. In terms of assembly, homodimer. The cofactor is pyridoxal 5'-phosphate.

It localises to the cytoplasm. It carries out the reaction (S)-4-amino-5-oxopentanoate = 5-aminolevulinate. The protein operates within porphyrin-containing compound metabolism; protoporphyrin-IX biosynthesis; 5-aminolevulinate from L-glutamyl-tRNA(Glu): step 2/2. This chain is Glutamate-1-semialdehyde 2,1-aminomutase, found in Tolumonas auensis (strain DSM 9187 / NBRC 110442 / TA 4).